The following is a 342-amino-acid chain: Succinoglycan biosynthesis protein ExoU (342 aa).

The protein belongs to the glycosyltransferase 2 family.

Its subcellular location is the cytoplasm. It functions in the pathway glycan metabolism; exopolysaccharide biosynthesis. Functionally, glycosyltransferase required for the synthesis of succinoglycan (EPS I). Needed for the addition of the sixth sugar (glucose), catalyzes the formation of a beta-1,6 linkage between the fifth and sixth sugar. This chain is Succinoglycan biosynthesis protein ExoU (exoU), found in Rhizobium meliloti (strain 1021) (Ensifer meliloti).